A 398-amino-acid chain; its full sequence is Acetate kinase (398 aa).

N10 contacts Mg(2+). ATP is bound at residue K17. R89 is a binding site for substrate. D148 acts as the Proton donor/acceptor in catalysis. Residues 208–212 (HLGNG), 283–285 (DCR), and 331–335 (GIGEN) each bind ATP. E385 is a binding site for Mg(2+).

The protein belongs to the acetokinase family. In terms of assembly, homodimer. Requires Mg(2+) as cofactor. Mn(2+) serves as cofactor.

It localises to the cytoplasm. It catalyses the reaction acetate + ATP = acetyl phosphate + ADP. Its pathway is metabolic intermediate biosynthesis; acetyl-CoA biosynthesis; acetyl-CoA from acetate: step 1/2. Functionally, catalyzes the formation of acetyl phosphate from acetate and ATP. Can also catalyze the reverse reaction. The protein is Acetate kinase of Histophilus somni (strain 2336) (Haemophilus somnus).